The chain runs to 313 residues: Protein FixB (313 aa).

An FAD-binding site is contributed by 255-283; sequence LYLAVGISGQIQHMVGANASQTIFAINKD.

The protein belongs to the ETF alpha-subunit/FixB family. As to quaternary structure, heterodimer of FixA and FixB.

It participates in amine and polyamine metabolism; carnitine metabolism. In terms of biological role, required for anaerobic carnitine reduction. May bring reductant to CaiA. The polypeptide is Protein FixB (Escherichia coli O127:H6 (strain E2348/69 / EPEC)).